The following is a 383-amino-acid chain: MAKHLFTSESVSEGHPDKIADQISDAVLDAILEQDPKARVACETYVKTGMVLVGGEITTSAWVDIEEITRRTVRDIGYVNSEMGFDANSCAVLSAIGKQSPDINQGVDRRDPLEQGAGDQGLMFGYATNETDVLMPAPVTYAHRLVHRQSEVRKSGSLPWLRPDAKSQVTFLYDDGKIAGIDAVVLSTQHSEDVSQKDLHEAVMEEIIKPVLPAEWLSASTKYFINPTGRFVIGGPMGDCGLTGRKIIVDTYGGAARHGGGAFSGKDPSKVDRSAAYAARYVAKNIVAAGLADRCEIQVSYAIGVAEPTSIMIETFGTEKVSNEQLTLLVREFFDLRPYGLIQMLDLLHPIYQETAAYGHFGREHFPWEKTDKAAQLREAAGL.

His-15 is an ATP binding site. Asp-17 is a Mg(2+) binding site. Glu-43 provides a ligand contact to K(+). Residues Glu-56 and Gln-99 each contribute to the L-methionine site. Residues 99 to 109 form a flexible loop region; the sequence is QSPDINQGVDR. ATP-binding positions include 164–166, 230–231, Asp-239, 245–246, Ala-262, and Lys-266; these read DAK, RF, and RK. L-methionine is bound at residue Asp-239. Residue Lys-270 participates in L-methionine binding.

The protein belongs to the AdoMet synthase family. Homotetramer; dimer of dimers. The cofactor is Mg(2+). K(+) serves as cofactor.

The protein resides in the cytoplasm. It catalyses the reaction L-methionine + ATP + H2O = S-adenosyl-L-methionine + phosphate + diphosphate. The protein operates within amino-acid biosynthesis; S-adenosyl-L-methionine biosynthesis; S-adenosyl-L-methionine from L-methionine: step 1/1. In terms of biological role, catalyzes the formation of S-adenosylmethionine (AdoMet) from methionine and ATP. The overall synthetic reaction is composed of two sequential steps, AdoMet formation and the subsequent tripolyphosphate hydrolysis which occurs prior to release of AdoMet from the enzyme. In Pectobacterium atrosepticum (strain SCRI 1043 / ATCC BAA-672) (Erwinia carotovora subsp. atroseptica), this protein is S-adenosylmethionine synthase.